The chain runs to 966 residues: Aminopeptidase N (966 aa).

At 1-8 (MAKGFYIS) the chain is on the cytoplasmic side. A helical; Signal-anchor for type II membrane protein membrane pass occupies residues 9–32 (KTLGILGILLGVAAVCTIIALSVV). The segment at 33 to 68 (YAQEKNRNAENSATAPTLPGSTSATTATTTPAVDES) is cytosolic Ser/Thr-rich junction. Residues 33–966 (YAQEKNRNAE…VFKWFTENSS (934 aa)) are Extracellular-facing. Residues 42 to 64 (ENSATAPTLPGSTSATTATTTPA) are disordered. Residues 44–64 (SATAPTLPGSTSATTATTTPA) show a composition bias toward low complexity. Positions 69 to 966 (KPWNQYRLPK…VFKWFTENSS (898 aa)) are metalloprotease. Residues N106, N114, and N128 are each glycosylated (N-linked (GlcNAc...) asparagine). A Sulfotyrosine modification is found at Y176. N234, N288, N318, and N332 each carry an N-linked (GlcNAc...) asparagine glycan. 351 to 355 (GAMEN) contributes to the substrate binding site. H387 contacts Zn(2+). The active-site Proton acceptor is the E388. Positions 391 and 410 each coordinate Zn(2+). 2 positions are modified to sulfotyrosine: Y418 and Y423. Residues N573, N606, N624, and N734 are each glycosylated (N-linked (GlcNAc...) asparagine). A disulfide bridge connects residues C760 and C767. N784 and N817 each carry an N-linked (GlcNAc...) asparagine glycan. C797 and C833 are joined by a disulfide. Y852 bears the Phosphotyrosine mark.

It belongs to the peptidase M1 family. Homodimer. Interacts with SLC6A19. Requires Zn(2+) as cofactor. N- and O-glycosylated. Post-translationally, sulfated. In terms of processing, may undergo proteolysis and give rise to a soluble form. As to expression, expressed in the intestinal brush border (at protein level). Highly expressed in intestinal tract and kidney, present in liver, lymph node, spleen, and brain. Found as well in monocytes, macrophages, dendritic cells, veiled cells and B-cells but not on T-cells and thymocytes.

It localises to the cell membrane. The enzyme catalyses Release of an N-terminal amino acid, Xaa-|-Yaa- from a peptide, amide or arylamide. Xaa is preferably Ala, but may be most amino acids including Pro (slow action). When a terminal hydrophobic residue is followed by a prolyl residue, the two may be released as an intact Xaa-Pro dipeptide.. In terms of biological role, broad specificity aminopeptidase which plays a role in the final digestion of peptides generated from hydrolysis of proteins by gastric and pancreatic proteases. Also involved in the processing of various peptides including peptide hormones, such as angiotensin III and IV, neuropeptides, and chemokines. May also be involved the cleavage of peptides bound to major histocompatibility complex class II molecules of antigen presenting cells. May have a role in angiogenesis and promote cholesterol crystallization. May have a role in amino acid transport by acting as binding partner of amino acid transporter SLC6A19 and regulating its activity. The chain is Aminopeptidase N (Anpep) from Mus musculus (Mouse).